The following is a 382-amino-acid chain: Anhydro-N-acetylmuramic acid kinase (382 aa).

Residue 9–16 participates in ATP binding; it reads GTSLDGID.

The protein belongs to the anhydro-N-acetylmuramic acid kinase family.

The catalysed reaction is 1,6-anhydro-N-acetyl-beta-muramate + ATP + H2O = N-acetyl-D-muramate 6-phosphate + ADP + H(+). Its pathway is amino-sugar metabolism; 1,6-anhydro-N-acetylmuramate degradation. It functions in the pathway cell wall biogenesis; peptidoglycan recycling. Catalyzes the specific phosphorylation of 1,6-anhydro-N-acetylmuramic acid (anhMurNAc) with the simultaneous cleavage of the 1,6-anhydro ring, generating MurNAc-6-P. Is required for the utilization of anhMurNAc either imported from the medium or derived from its own cell wall murein, and thus plays a role in cell wall recycling. The polypeptide is Anhydro-N-acetylmuramic acid kinase (Bacillus cereus (strain ZK / E33L)).